The primary structure comprises 314 residues: F-box protein AUF2 (314 aa).

One can recognise an F-box domain in the interval 1-49 (MDVFDGLPDPIIVDILNKVGDVKTLLRCSSLSKRFNSLVPQSESLTLRL).

As to quaternary structure, part of a SCF (ASK-cullin-F-box) protein ligase complex.

It is found in the nucleus. It functions in the pathway protein modification; protein ubiquitination. Functionally, component of SCF(ASK-cullin-F-box) E3 ubiquitin ligase complexes, which may mediate the ubiquitination and subsequent proteasomal degradation of target proteins. This chain is F-box protein AUF2, found in Arabidopsis thaliana (Mouse-ear cress).